The sequence spans 300 residues: Protoheme IX farnesyltransferase 1 (300 aa).

The next 8 membrane-spanning stretches (helical) occupy residues 26-46, 48-68, 97-117, 120-140, 148-168, 174-194, 226-246, and 280-300; these read VVVL…RAGV, WTVL…AAAV, AALA…LTFT, LTAW…TGFL, IVIG…AATG, PLLL…ALAI, FALL…VLYL, and IYYL…LLNL.

Belongs to the UbiA prenyltransferase family. Protoheme IX farnesyltransferase subfamily.

It localises to the cell inner membrane. It catalyses the reaction heme b + (2E,6E)-farnesyl diphosphate + H2O = Fe(II)-heme o + diphosphate. The protein operates within porphyrin-containing compound metabolism; heme O biosynthesis; heme O from protoheme: step 1/1. Functionally, converts heme B (protoheme IX) to heme O by substitution of the vinyl group on carbon 2 of heme B porphyrin ring with a hydroxyethyl farnesyl side group. The sequence is that of Protoheme IX farnesyltransferase 1 from Pseudomonas fluorescens (strain ATCC BAA-477 / NRRL B-23932 / Pf-5).